A 643-amino-acid polypeptide reads, in one-letter code: Asparagine synthetase domain-containing protein 1 (643 aa).

The active-site For GATase activity is cysteine 2. Residues 2 to 184 (CGICCSVNFS…ASGLFRIDLK (183 aa)) form the Glutamine amidotransferase type-2 domain. The Asparagine synthetase domain maps to 285–601 (QFIDVLSVAV…GLTASALLPK (317 aa)).

The polypeptide is Asparagine synthetase domain-containing protein 1 (ASNSD1) (Homo sapiens (Human)).